The sequence spans 376 residues: Succinyl-diaminopimelate desuccinylase (376 aa).

Zn(2+) is bound at residue His66. Residue Asp68 is part of the active site. Asp99 contributes to the Zn(2+) binding site. Residue Glu133 is the Proton acceptor of the active site. Zn(2+) contacts are provided by Glu134, Glu162, and His349.

The protein belongs to the peptidase M20A family. DapE subfamily. Homodimer. Zn(2+) is required as a cofactor. The cofactor is Co(2+).

It catalyses the reaction N-succinyl-(2S,6S)-2,6-diaminopimelate + H2O = (2S,6S)-2,6-diaminopimelate + succinate. Its pathway is amino-acid biosynthesis; L-lysine biosynthesis via DAP pathway; LL-2,6-diaminopimelate from (S)-tetrahydrodipicolinate (succinylase route): step 3/3. Its function is as follows. Catalyzes the hydrolysis of N-succinyl-L,L-diaminopimelic acid (SDAP), forming succinate and LL-2,6-diaminopimelate (DAP), an intermediate involved in the bacterial biosynthesis of lysine and meso-diaminopimelic acid, an essential component of bacterial cell walls. This chain is Succinyl-diaminopimelate desuccinylase, found in Ruthia magnifica subsp. Calyptogena magnifica.